The chain runs to 148 residues: Pivalyl-CoA mutase small subunit (148 aa).

The B12-binding domain maps to 8–138; it reads PLRVLVTKIG…TALGQKSRAE (131 aa). Position 21 (His21) interacts with adenosylcob(III)alamin.

Belongs to the acyl-CoA mutase small subunit family. In terms of assembly, monomer in the absence of the PCM large subunit. Weakly interacts with the PCM large subunit; an alpha(2)beta(2) stoichiometry seems to represent the active state of the enzyme. It depends on adenosylcob(III)alamin as a cofactor.

It carries out the reaction 3-methylbutanoyl-CoA = 2,2-dimethylpropanoyl-CoA. Together with Xaut_5043, catalyzes the reversible isomerization between pivalyl-CoA and isovaleryl-CoA, using radical chemistry. Does not exhibit isobutyryl-CoA mutase (ICM) activity. This Xanthobacter autotrophicus (strain ATCC BAA-1158 / Py2) protein is Pivalyl-CoA mutase small subunit.